Reading from the N-terminus, the 316-residue chain is Pantothenate kinase (316 aa).

95-102 (GSVAVGKS) is a binding site for ATP.

It belongs to the prokaryotic pantothenate kinase family.

The protein localises to the cytoplasm. It carries out the reaction (R)-pantothenate + ATP = (R)-4'-phosphopantothenate + ADP + H(+). It participates in cofactor biosynthesis; coenzyme A biosynthesis; CoA from (R)-pantothenate: step 1/5. This is Pantothenate kinase from Shewanella baltica (strain OS195).